Here is a 110-residue protein sequence, read N- to C-terminus: MEWGPGAGWSRGEAAGVDRGKAGLGLGGRPPPQPPRDERAQQLLDAVEQRQRQLLDTIAACEEMLRQLGRRRPEPAGGGNGSAKSGAPPQPSVSARGGLPKDAGDGASES.

2 disordered regions span residues 1-41 (MEWG…ERAQ) and 65-110 (LRQL…ASES). The stretch at 38 to 68 (ERAQQLLDAVEQRQRQLLDTIAACEEMLRQL) forms a coiled coil.

This is an uncharacterized protein from Mus musculus (Mouse).